Here is a 194-residue protein sequence, read N- to C-terminus: Outer-membrane lipoprotein LolB (194 aa).

The signal sequence occupies residues 1–18 (MTLLLRLFTLGCLLLLAG). Residue cysteine 19 is the site of N-palmitoyl cysteine attachment. The S-diacylglycerol cysteine moiety is linked to residue cysteine 19.

This sequence belongs to the LolB family. As to quaternary structure, monomer.

Its subcellular location is the cell outer membrane. Functionally, plays a critical role in the incorporation of lipoproteins in the outer membrane after they are released by the LolA protein. This chain is Outer-membrane lipoprotein LolB, found in Aeromonas hydrophila subsp. hydrophila (strain ATCC 7966 / DSM 30187 / BCRC 13018 / CCUG 14551 / JCM 1027 / KCTC 2358 / NCIMB 9240 / NCTC 8049).